The following is a 386-amino-acid chain: LL-diaminopimelate aminotransferase (386 aa).

2 residues coordinate substrate: Tyr13 and Gly38. Pyridoxal 5'-phosphate is bound by residues Tyr67, 101 to 102 (SK), Tyr126, Asn176, Tyr207, and 235 to 237 (SLS). Positions 102, 126, and 176 each coordinate substrate. Lys238 carries the N6-(pyridoxal phosphate)lysine modification. Arg246 is a binding site for pyridoxal 5'-phosphate. Arg364 contributes to the substrate binding site.

The protein belongs to the class-I pyridoxal-phosphate-dependent aminotransferase family. LL-diaminopimelate aminotransferase subfamily. As to quaternary structure, homodimer. Pyridoxal 5'-phosphate is required as a cofactor.

It catalyses the reaction (2S,6S)-2,6-diaminopimelate + 2-oxoglutarate = (S)-2,3,4,5-tetrahydrodipicolinate + L-glutamate + H2O + H(+). It functions in the pathway amino-acid biosynthesis; L-lysine biosynthesis via DAP pathway; LL-2,6-diaminopimelate from (S)-tetrahydrodipicolinate (aminotransferase route): step 1/1. Its function is as follows. Involved in the synthesis of meso-diaminopimelate (m-DAP or DL-DAP), required for both lysine and peptidoglycan biosynthesis. Catalyzes the direct conversion of tetrahydrodipicolinate to LL-diaminopimelate. The chain is LL-diaminopimelate aminotransferase from Natranaerobius thermophilus (strain ATCC BAA-1301 / DSM 18059 / JW/NM-WN-LF).